Consider the following 263-residue polypeptide: MRRIGLEALERVLYPVIPVVVTAEHQGRVGGMLAAWWMQASFTPPILAVAIAPERYTYKLVRESGVFAFNLLDFKLVDKAPFLGDVSERLLPGKIREAGLNIVRGEVLGAPLIAEASAAVELELVDVVEAGDHDVFLGEAKAVYTVDDFRGGMWSLETYRPLMYLGRTRRPGPVYRVYLTPRGWERREIEFAGGKLKPLAEKRVRLISRVEEAVKASSSREEAVDAVRRILSEEGLDPSDAEYLVEDALRRAKSYRRRGQSSS.

The protein belongs to the flavoredoxin family. It depends on FMN as a cofactor.

This is an uncharacterized protein from Aeropyrum pernix (strain ATCC 700893 / DSM 11879 / JCM 9820 / NBRC 100138 / K1).